The primary structure comprises 488 residues: Proline--tRNA ligase (488 aa).

This sequence belongs to the class-II aminoacyl-tRNA synthetase family. ProS type 3 subfamily. Homodimer.

It is found in the cytoplasm. The catalysed reaction is tRNA(Pro) + L-proline + ATP = L-prolyl-tRNA(Pro) + AMP + diphosphate. Functionally, catalyzes the attachment of proline to tRNA(Pro) in a two-step reaction: proline is first activated by ATP to form Pro-AMP and then transferred to the acceptor end of tRNA(Pro). This chain is Proline--tRNA ligase, found in Pyrobaculum islandicum (strain DSM 4184 / JCM 9189 / GEO3).